A 481-amino-acid chain; its full sequence is Exodeoxyribonuclease I (481 aa).

The Exonuclease domain maps to L12 to I193. Mg(2+) is bound by residues D15, E17, and D186. Residue E17 coordinates substrate. The region spanning P202–A350 is the ExoI SH3-like domain. The region spanning N356–R471 is the ExoI C-terminal domain.

Monomer. Interacts with ssb (via C-terminus); this interaction stimulates the exonuclease activity by recruiting the enzyme to its substrate. Mg(2+) is required as a cofactor.

It catalyses the reaction Exonucleolytic cleavage in the 3'- to 5'-direction to yield nucleoside 5'-phosphates.. Functionally, degrades single-stranded DNA (ssDNA) in a highly processive manner. Also functions as a DNA deoxyribophosphodiesterase that releases deoxyribose-phosphate moieties following the cleavage of DNA at an apurinic/apyrimidinic (AP) site by either an AP endonuclease or AP lyase. The polypeptide is Exodeoxyribonuclease I (sbcB) (Buchnera aphidicola subsp. Baizongia pistaciae (strain Bp)).